Consider the following 445-residue polypeptide: Proline--tRNA ligase (445 aa).

The protein belongs to the class-II aminoacyl-tRNA synthetase family. ProS type 2 subfamily. As to quaternary structure, homodimer.

It is found in the cytoplasm. The catalysed reaction is tRNA(Pro) + L-proline + ATP = L-prolyl-tRNA(Pro) + AMP + diphosphate. Functionally, catalyzes the attachment of proline to tRNA(Pro) in a two-step reaction: proline is first activated by ATP to form Pro-AMP and then transferred to the acceptor end of tRNA(Pro). The polypeptide is Proline--tRNA ligase (Cereibacter sphaeroides (strain ATCC 17023 / DSM 158 / JCM 6121 / CCUG 31486 / LMG 2827 / NBRC 12203 / NCIMB 8253 / ATH 2.4.1.) (Rhodobacter sphaeroides)).